The primary structure comprises 206 residues: Ribosomal RNA large subunit methyltransferase E (206 aa).

Gly-61, Trp-63, Asp-81, Asp-97, and Asp-122 together coordinate S-adenosyl-L-methionine. Catalysis depends on Lys-162, which acts as the Proton acceptor.

It belongs to the class I-like SAM-binding methyltransferase superfamily. RNA methyltransferase RlmE family.

The protein resides in the cytoplasm. The catalysed reaction is uridine(2552) in 23S rRNA + S-adenosyl-L-methionine = 2'-O-methyluridine(2552) in 23S rRNA + S-adenosyl-L-homocysteine + H(+). Functionally, specifically methylates the uridine in position 2552 of 23S rRNA at the 2'-O position of the ribose in the fully assembled 50S ribosomal subunit. In Neisseria meningitidis serogroup C / serotype 2a (strain ATCC 700532 / DSM 15464 / FAM18), this protein is Ribosomal RNA large subunit methyltransferase E.